We begin with the raw amino-acid sequence, 69 residues long: uncharacterized protein (69 aa).

This is an uncharacterized protein from Sinorhizobium fredii (strain NBRC 101917 / NGR234).